Consider the following 85-residue polypeptide: MDQLNNREQQEFQQLVEQKQMKDFMRLYSSLVQRCFTDCVNDFTSKALSSREESCLEKCSEKFLKHSERVGQRFQEQNAALMQKR.

A Twin CX3C motif motif is present at residues 35–59 (CFTDCVNDFTSKALSSREESCLEKC). Cystine bridges form between Cys-35–Cys-59 and Cys-39–Cys-55.

Belongs to the small Tim family. In terms of assembly, heterohexamer; composed of 3 copies of TIM9 and 3 copies of TIM10, named soluble 70 kDa complex. Associates with the TIM22 complex, whose core is composed of TIM22 and TIM54. Interacts with the transmembrane regions of multi-pass transmembrane proteins in transit.

Its subcellular location is the mitochondrion inner membrane. Mitochondrial intermembrane chaperone that participates in the import and insertion of multi-pass transmembrane proteins into the mitochondrial inner membrane. Also required for the transfer of beta-barrel precursors from the TOM complex to the sorting and assembly machinery (SAM complex) of the outer membrane. Acts as a chaperone-like protein that protects the hydrophobic precursors from aggregation and guide them through the mitochondrial intermembrane space. The sequence is that of Mitochondrial import inner membrane translocase subunit TIM9 (TIM9) from Yarrowia lipolytica (strain CLIB 122 / E 150) (Yeast).